Consider the following 183-residue polypeptide: Dual-action ribosomal maturation protein DarP (183 aa).

This sequence belongs to the DarP family.

The protein resides in the cytoplasm. In terms of biological role, member of a network of 50S ribosomal subunit biogenesis factors which assembles along the 30S-50S interface, preventing incorrect 23S rRNA structures from forming. Promotes peptidyl transferase center (PTC) maturation. The polypeptide is Dual-action ribosomal maturation protein DarP (Salmonella enteritidis PT4 (strain P125109)).